Here is a 396-residue protein sequence, read N- to C-terminus: S-adenosylmethionine synthase (396 aa).

Position 16 (His16) interacts with ATP. Asp18 provides a ligand contact to Mg(2+). Glu44 contacts K(+). L-methionine is bound by residues Glu57 and Gln100. The interval 100 to 110 (QSVDIAQGVDR) is flexible loop. Residues 165-167 (DAK), Asp240, 246-247 (RK), Ala263, and Lys267 contribute to the ATP site. L-methionine is bound at residue Asp240. L-methionine is bound at residue Lys271.

Belongs to the AdoMet synthase family. Homotetramer; dimer of dimers. It depends on Mg(2+) as a cofactor. K(+) serves as cofactor.

It is found in the cytoplasm. The catalysed reaction is L-methionine + ATP + H2O = S-adenosyl-L-methionine + phosphate + diphosphate. Its pathway is amino-acid biosynthesis; S-adenosyl-L-methionine biosynthesis; S-adenosyl-L-methionine from L-methionine: step 1/1. Catalyzes the formation of S-adenosylmethionine (AdoMet) from methionine and ATP. The overall synthetic reaction is composed of two sequential steps, AdoMet formation and the subsequent tripolyphosphate hydrolysis which occurs prior to release of AdoMet from the enzyme. This chain is S-adenosylmethionine synthase, found in Pseudomonas entomophila (strain L48).